The chain runs to 1436 residues: Pleiotropic drug resistance protein 1 (1436 aa).

Residues 165–438 (LDSIHILPSK…FESMGFKCPE (274 aa)) enclose the ABC transporter 1 domain. 198-205 (GPPGSGKT) serves as a coordination point for ATP. The region spanning 516 to 729 (QLLKVCTERE…SVNAILVNEF (214 aa)) is the ABC transmembrane type-2 1 domain. The next 7 membrane-spanning stretches (helical) occupy residues 534-554 (FVYL…MTIF), 567-587 (GGIY…NGLS), 622-642 (IPVT…VMGF), 653-673 (FLLL…IAAV), 679-699 (VAST…GFIL), 707-727 (WWIW…ILVN), and 764-784 (IGVG…SVAL). A disordered region spans residues 796–826 (TISDESENNESESSPQITSTQEGDSASENKK). A compositionally biased stretch (polar residues) spans 810–821 (PQITSTQEGDSA). The ABC transporter 2 domain maps to 838–1090 (ITFDEVVYSV…HLIKYFESIP (253 aa)). ATP is bound at residue 883–890 (GVSGAGKT). Residues 1163 to 1377 (TQCMACLWKQ…TLYGLVASQF (215 aa)) form the ABC transmembrane type-2 2 domain. 7 helical membrane passes run 1184-1204 (AVRL…FWDI), 1214-1234 (LVNA…QNSS), 1270-1290 (IPYI…MIGF), 1301-1321 (FFFM…TVAV), 1327-1347 (VASI…GFIV), 1358-1378 (WYYW…SQFG), and 1408-1428 (VVAA…ALGI).

It belongs to the ABC transporter superfamily. ABCG family. PDR (TC 3.A.1.205) subfamily. In terms of tissue distribution, roots, petals and leaf epidermis, where it is confined to glandular trichomes (at protein level).

It is found in the cell membrane. Functionally, excretes secondary metabolites such as terpenes. Involved in both constitutive and jasmonic acid-dependent induced defense. Confers some resistance to sclareol and B.cinerea. In Nicotiana plumbaginifolia (Leadwort-leaved tobacco), this protein is Pleiotropic drug resistance protein 1 (PDR1).